The chain runs to 389 residues: Succinyl-diaminopimelate desuccinylase (389 aa).

A Zn(2+)-binding site is contributed by His-75. Residue Asp-77 is part of the active site. Zn(2+) is bound at residue Asp-108. Glu-142 serves as the catalytic Proton acceptor. The Zn(2+) site is built by Glu-143, Glu-171, and His-357.

Belongs to the peptidase M20A family. DapE subfamily. In terms of assembly, homodimer. The cofactor is Zn(2+). Co(2+) serves as cofactor.

It carries out the reaction N-succinyl-(2S,6S)-2,6-diaminopimelate + H2O = (2S,6S)-2,6-diaminopimelate + succinate. It functions in the pathway amino-acid biosynthesis; L-lysine biosynthesis via DAP pathway; LL-2,6-diaminopimelate from (S)-tetrahydrodipicolinate (succinylase route): step 3/3. Catalyzes the hydrolysis of N-succinyl-L,L-diaminopimelic acid (SDAP), forming succinate and LL-2,6-diaminopimelate (DAP), an intermediate involved in the bacterial biosynthesis of lysine and meso-diaminopimelic acid, an essential component of bacterial cell walls. This is Succinyl-diaminopimelate desuccinylase from Paracidovorax citrulli (strain AAC00-1) (Acidovorax citrulli).